We begin with the raw amino-acid sequence, 971 residues long: Nitrogen regulatory protein areA (971 aa).

Disordered regions lie at residues 39–61, 146–169, 262–307, 390–416, and 587–691; these read IHNA…DASA, HKEE…DAGS, QPAH…VNST, SASM…NVST, and DNNG…GNAP. Over residues 42–59 the composition is skewed to polar residues; that stretch reads APTQRTXNSNRIPNSRDA. Positions 146–159 are enriched in basic and acidic residues; that stretch reads HKEEQQQRQDEADA. Composition is skewed to polar residues over residues 262-274 and 297-307; these read QPAH…SEFN and FSPQVPAVNST. Low complexity predominate over residues 390–400; the sequence is SASMSNNNNNS. Polar residues-rich tracts occupy residues 597–606 and 632–645; these read LERSQSQSFR and NGFE…QSSP. 2 stretches are compositionally biased toward low complexity: residues 654–663 and 680–691; these read SGFSSVAPSR and AAAGNGNDGNAP. A GATA-type zinc finger spans residues 694–718; sequence CTNCFTQTTPLWRRNPEGQPLCNAC. The disordered stretch occupies residues 742–918; it reads NRGSGTNVPV…PFGSSAGLSS (177 aa). A compositionally biased stretch (polar residues) spans 744–794; it reads GSGTNVPVGGSSTRSKKTASTLNSRKNSTLSMSTATANSTKPNSSNPTPRV. Over residues 796-826 the composition is skewed to low complexity; the sequence is TPPATSQPPSSKDVDSPVSGTTSGANTAGST. A compositionally biased stretch (gly residues) spans 832 to 845; it reads GGPGPSSGAVGGKG. Positions 863-875 are enriched in polar residues; the sequence is SSMSMQRPATASS. A compositionally biased stretch (low complexity) spans 892 to 918; that stretch reads SMDIDSPDSTSSIDGPRPFGSSAGLSS.

The protein localises to the nucleus. Functionally, major nitrogen regulatory protein. Positively acting regulatory gene of nitrogen metabolite repression. This is Nitrogen regulatory protein areA (AREA) from Fusarium fujikuroi (Bakanae and foot rot disease fungus).